The primary structure comprises 379 residues: Heterogeneous nuclear ribonucleoprotein A3 (379 aa).

The residue at position 1 (Met-1) is an N-acetylmethionine. The span at 1-10 shows a compositional bias: pro residues; sequence MEVKPPPGRP. Positions 1–34 are disordered; the sequence is MEVKPPPGRPQPDSGRRRRRRGEEGHDPKEPEQL. Lys-4 participates in a covalent cross-link: Glycyl lysine isopeptide (Lys-Gly) (interchain with G-Cter in SUMO2). Position 14 is a phosphoserine (Ser-14). Basic and acidic residues predominate over residues 21–34; that stretch reads RGEEGHDPKEPEQL. In terms of domain architecture, RRM 1 spans 35–118; sequence RKLFIGGLSF…RAVSREDSVK (84 aa). Lys-36 is covalently cross-linked (Glycyl lysine isopeptide (Lys-Gly) (interchain with G-Cter in SUMO2)). Ser-43 is subject to Phosphoserine. Arg-52 is subject to Dimethylated arginine; alternate. Arg-52 carries the omega-N-methylarginine; alternate modification. Position 76 is an omega-N-methylarginine (Arg-76). Phosphoserine is present on residues Ser-112 and Ser-116. A Glycyl lysine isopeptide (Lys-Gly) (interchain with G-Cter in SUMO2) cross-link involves residue Lys-118. Position 124 is a phosphothreonine (Thr-124). The RRM 2 domain maps to 126–205; the sequence is KKIFVGGIKE…CEVKKALSKQ (80 aa). Lys-134 is subject to N6-acetyllysine; alternate. Residue Lys-134 forms a Glycyl lysine isopeptide (Lys-Gly) (interchain with G-Cter in SUMO2); alternate linkage. Residues Lys-151 and Lys-182 each participate in a glycyl lysine isopeptide (Lys-Gly) (interchain with G-Cter in SUMO2) cross-link. The segment at 204 to 225 is disordered; sequence KQEMQSAGSQRGRGGGSGNFMG. Omega-N-methylarginine; alternate occurs at positions 214, 216, 226, 239, and 246. Asymmetric dimethylarginine; alternate is present on residues Arg-214, Arg-216, Arg-226, Arg-239, and Arg-246. Over residues 214–225 the composition is skewed to gly residues; it reads RGRGGGSGNFMG. The residue at position 257 (Arg-257) is an Omega-N-methylarginine. Arg-286 is modified (asymmetric dimethylarginine). The segment at 335–379 is disordered; sequence NYSGQQQSNYGPMKGGSFGGRSSGSPYGGGYGSGGGSGGYGSRRF. The span at 347–379 shows a compositional bias: gly residues; that stretch reads MKGGSFGGRSSGSPYGGGYGSGGGSGGYGSRRF. Ser-351 carries the post-translational modification Phosphoserine. Residue Arg-355 is modified to Omega-N-methylarginine. Ser-359 carries the post-translational modification Phosphoserine. 2 positions are modified to phosphotyrosine: Tyr-361 and Tyr-365. Phosphoserine occurs at positions 367 and 371. Tyr-374 carries the post-translational modification Phosphotyrosine. Ser-376 is subject to Phosphoserine.

Identified in the spliceosome C complex.

Its subcellular location is the nucleus. Functionally, plays a role in cytoplasmic trafficking of RNA. Binds to the cis-acting response element, A2RE. May be involved in pre-mRNA splicing. This is Heterogeneous nuclear ribonucleoprotein A3 (Hnrnpa3) from Mus musculus (Mouse).